Reading from the N-terminus, the 195-residue chain is Probable nicotinate-nucleotide adenylyltransferase (195 aa).

It belongs to the NadD family.

The enzyme catalyses nicotinate beta-D-ribonucleotide + ATP + H(+) = deamido-NAD(+) + diphosphate. The protein operates within cofactor biosynthesis; NAD(+) biosynthesis; deamido-NAD(+) from nicotinate D-ribonucleotide: step 1/1. In terms of biological role, catalyzes the reversible adenylation of nicotinate mononucleotide (NaMN) to nicotinic acid adenine dinucleotide (NaAD). The sequence is that of Probable nicotinate-nucleotide adenylyltransferase from Chlorobaculum tepidum (strain ATCC 49652 / DSM 12025 / NBRC 103806 / TLS) (Chlorobium tepidum).